The following is an 870-amino-acid chain: MAKVVETPLMKQYFDIKAKHPDAILLFRVGDFYEMYGEDAVIGAEILGIVQTKRANGVGQHVEMAGFPHHALDSYLPKLVRAGKRVAICDQLEDPKLTKKLVKRGITELVTPGVSINDNILNHKENNFLASIHFAKEVCGISFLDISTGEFMTAEGSIDYIDKLLNNFSPKEVLIERGNKKRFEEAFGPRFFIFELDDWIFTTSAAEDRLLKHFETKNLKGFGVQHLKLGIIASGAILYYLDQTQHTHISHITALSRIEEDRYVRLDKFTVRSLELVGTMNDEGTSLLDVIDKTISPMGSRMLRRWILFPLKDVKPIQERQEVVDYFFREPETKELLDTQLEQIGDLERIISKVAVGRVSPREVVQLKVALRAIEPIKEACMASGEPSLCRIGEQLNACALIRDRIEKEINNDPPSLVNKGGIIAKGVNEELDDLRAIAYSGKDYLLKVQQREIELTGIPSLKIAFNNVFGYYIEVRNTHKDKVPANWIRKQTLVNAERYITEELKEYEEKILGAEEKILALETRLFNELVLALTEYIPPIQMNANLIGRIDCLLSFAKAAEANKYIRPVVSDSDKIDIKGGRHPVIEKQLPLGEPYIANDVYLDDEKQQIIIITGPNMAGKSALLRQTALITLMAQIGCFVPAESAHIGIVDKIFTRVGASDNISVGESTFMVEMNEASDILNNMTSRSLVLFDELGRGTSTYDGISIAWAIVEYIHEHPNAKAKTLFATHYHELNEMERAFKRIKNYNVSVKEVGNKVIFLRKLIPGGSEHSFGIHVAKMAGMPKSIVKRSNEILKQLESENRQEGITGKPVKAIASAAEGYQLSFFQLDDPVLSQVRDEIKNLDVNNLTPLEALNKLIEIKRIITGK.

616–623 (GPNMAGKS) is an ATP binding site.

Belongs to the DNA mismatch repair MutS family.

In terms of biological role, this protein is involved in the repair of mismatches in DNA. It is possible that it carries out the mismatch recognition step. This protein has a weak ATPase activity. This Parabacteroides distasonis (strain ATCC 8503 / DSM 20701 / CIP 104284 / JCM 5825 / NCTC 11152) protein is DNA mismatch repair protein MutS.